The following is a 418-amino-acid chain: Tyrosine--tRNA ligase (418 aa).

Position 38 (tyrosine 38) interacts with L-tyrosine. Positions 43 to 52 (CTAKSLHVGS) match the 'HIGH' region motif. The L-tyrosine site is built by tyrosine 175 and glutamine 179. The 'KMSKS' region motif lies at 235–239 (KMGKT). Residue lysine 238 participates in ATP binding. An S4 RNA-binding domain is found at 348–413 (LPIIKLLQMC…CGKKRHLKVM (66 aa)).

This sequence belongs to the class-I aminoacyl-tRNA synthetase family. TyrS type 1 subfamily. In terms of assembly, homodimer.

Its subcellular location is the cytoplasm. The enzyme catalyses tRNA(Tyr) + L-tyrosine + ATP = L-tyrosyl-tRNA(Tyr) + AMP + diphosphate + H(+). Functionally, catalyzes the attachment of tyrosine to tRNA(Tyr) in a two-step reaction: tyrosine is first activated by ATP to form Tyr-AMP and then transferred to the acceptor end of tRNA(Tyr). The sequence is that of Tyrosine--tRNA ligase from Ehrlichia chaffeensis (strain ATCC CRL-10679 / Arkansas).